A 393-amino-acid polypeptide reads, in one-letter code: FAD-dependent monooxygenase dbaB (393 aa).

Residues 1-23 form the signal peptide; sequence MTRTSPTLPVIILGAGMVGLTLA. Residues Glu-37 and Arg-107 each contribute to the FAD site. Asn-128 is a glycosylation site (N-linked (GlcNAc...) asparagine). Residue Tyr-221 is part of the active site. Asn-233 carries N-linked (GlcNAc...) asparagine glycosylation. Asp-320 contacts FAD.

The protein belongs to the paxM FAD-dependent monooxygenase family. It depends on FAD as a cofactor.

The protein operates within secondary metabolite biosynthesis. In terms of biological role, FAD-dependent monooxygenase; part of the gene cluster that mediates the biosynthesis of the antibiotic 2,4-dihydroxy-3-methyl-6-(2-oxopropyl)benzaldehyde (DHMBA) and its derivatives. The direct non-reducing polyketide synthase dbaI product is 2,4-dihydroxy-3-methyl-6-(2-oxopropyl)benzaldehyde (DHMBA), produced by condensation of one acetyl-CoA starter unit with 4 malonyl-CoA units and one methylation step. The FAD-dependent monooxygenase dbaH is responsible for the synthesis of yellow pigments derived from the oxidation of DHMBA. The roles of dbaB, C, E and F have still to be determined. This chain is FAD-dependent monooxygenase dbaB, found in Emericella nidulans (strain FGSC A4 / ATCC 38163 / CBS 112.46 / NRRL 194 / M139) (Aspergillus nidulans).